The sequence spans 257 residues: Phosphonates import ATP-binding protein PhnC 1 (257 aa).

The region spanning 2 to 246 (IELKNVSKVY…VFKDIYGRPL (245 aa)) is the ABC transporter domain. 35 to 42 (GLSGAGKS) lines the ATP pocket.

This sequence belongs to the ABC transporter superfamily. Phosphonates importer (TC 3.A.1.9.1) family. As to quaternary structure, the complex is composed of two ATP-binding proteins (PhnC), two transmembrane proteins (PhnE) and a solute-binding protein (PhnD).

The protein localises to the cell membrane. It catalyses the reaction phosphonate(out) + ATP + H2O = phosphonate(in) + ADP + phosphate + H(+). Part of the ABC transporter complex PhnCDE involved in phosphonates import. Responsible for energy coupling to the transport system. The chain is Phosphonates import ATP-binding protein PhnC 1 from Halalkalibacterium halodurans (strain ATCC BAA-125 / DSM 18197 / FERM 7344 / JCM 9153 / C-125) (Bacillus halodurans).